The sequence spans 144 residues: Transcription antitermination protein NusB (144 aa).

This sequence belongs to the NusB family.

Its function is as follows. Involved in transcription antitermination. Required for transcription of ribosomal RNA (rRNA) genes. Binds specifically to the boxA antiterminator sequence of the ribosomal RNA (rrn) operons. This chain is Transcription antitermination protein NusB, found in Streptococcus agalactiae serotype Ia (strain ATCC 27591 / A909 / CDC SS700).